The primary structure comprises 398 residues: Cytochrome b (398 aa).

Residues 45 to 65 form a helical membrane-spanning segment; it reads LGSIAGIALVIQIITGVILAM. Residues H95 and H109 each coordinate heme b. 9 helical membrane-spanning segments follow: residues 96–116, 129–149, 164–184, 192–212, 245–265, 277–297, 304–324, 339–359, and 366–386; these read AVGA…GLYY, IGII…VLPW, FSAI…GFSV, FFSL…LHLV, FVGF…EPNY, PLVT…YAIL, LGGV…PWLD, MAFW…GQPA, and ISRF…PLIG. Residues H196 and H210 each coordinate heme b.

The protein belongs to the cytochrome b family. The main subunits of complex b-c1 are: cytochrome b, cytochrome c1 and the Rieske protein. Heme b is required as a cofactor.

The protein resides in the cell membrane. Component of the ubiquinol-cytochrome c reductase complex (complex III or cytochrome b-c1 complex), which is a respiratory chain that generates an electrochemical potential coupled to ATP synthesis. This Rickettsia conorii (strain ATCC VR-613 / Malish 7) protein is Cytochrome b (petB).